We begin with the raw amino-acid sequence, 149 residues long: MSLLKKCIGLDPNIRKPLDIGLIWEGNYWDDKDVHDCCDVDWETCEILVRKIAKALVLPTSPIDNGGIENKKILIFLPKVMQLPLTILAAYRVGLIGIVMDPLVSKNKVLEKIIMCEKPRIVVTVDAVWQAQELIEIKSKVEVRSIYEY.

This is an uncharacterized protein from Caenorhabditis elegans.